The sequence spans 736 residues: Phosphoribosylformylglycinamidine synthase subunit PurL (736 aa).

The active site involves histidine 48. ATP-binding residues include tyrosine 51 and lysine 90. Glutamate 92 serves as a coordination point for Mg(2+). Substrate is bound by residues 93–96 (SHNH) and arginine 115. The active-site Proton acceptor is histidine 94. Aspartate 116 provides a ligand contact to Mg(2+). Glutamine 239 is a binding site for substrate. Aspartate 267 provides a ligand contact to Mg(2+). Position 311–313 (311–313 (ESQ)) interacts with substrate. Residues aspartate 492 and glycine 529 each contribute to the ATP site. Asparagine 530 serves as a coordination point for Mg(2+). Residue serine 532 coordinates substrate.

It belongs to the FGAMS family. In terms of assembly, monomer. Part of the FGAM synthase complex composed of 1 PurL, 1 PurQ and 2 PurS subunits.

It is found in the cytoplasm. It catalyses the reaction N(2)-formyl-N(1)-(5-phospho-beta-D-ribosyl)glycinamide + L-glutamine + ATP + H2O = 2-formamido-N(1)-(5-O-phospho-beta-D-ribosyl)acetamidine + L-glutamate + ADP + phosphate + H(+). It participates in purine metabolism; IMP biosynthesis via de novo pathway; 5-amino-1-(5-phospho-D-ribosyl)imidazole from N(2)-formyl-N(1)-(5-phospho-D-ribosyl)glycinamide: step 1/2. Part of the phosphoribosylformylglycinamidine synthase complex involved in the purines biosynthetic pathway. Catalyzes the ATP-dependent conversion of formylglycinamide ribonucleotide (FGAR) and glutamine to yield formylglycinamidine ribonucleotide (FGAM) and glutamate. The FGAM synthase complex is composed of three subunits. PurQ produces an ammonia molecule by converting glutamine to glutamate. PurL transfers the ammonia molecule to FGAR to form FGAM in an ATP-dependent manner. PurS interacts with PurQ and PurL and is thought to assist in the transfer of the ammonia molecule from PurQ to PurL. This is Phosphoribosylformylglycinamidine synthase subunit PurL from Beijerinckia indica subsp. indica (strain ATCC 9039 / DSM 1715 / NCIMB 8712).